A 138-amino-acid polypeptide reads, in one-letter code: Small ribosomal subunit protein uS11B (138 aa).

Residues 118–138 (DVTPVPSDSTRKKGGRRGRRL) form a disordered region. Over residues 129–138 (KKGGRRGRRL) the composition is skewed to basic residues.

Belongs to the universal ribosomal protein uS11 family. As to quaternary structure, component of the small ribosomal subunit (SSU). Mature yeast ribosomes consist of a small (40S) and a large (60S) subunit. The 40S small subunit contains 1 molecule of ribosomal RNA (18S rRNA) and 33 different proteins (encoded by 57 genes). The large 60S subunit contains 3 rRNA molecules (25S, 5.8S and 5S rRNA) and 46 different proteins (encoded by 81 genes). uS11 interacts with eS1 forming part of the mRNA exit tunnel. uS11 interacts with snoRNA U3. uS11 interacts with MPP10. Component of the ribosomal small subunit (SSU) processome composed of at least 40 protein subunits and snoRNA U3.

It is found in the cytoplasm. Its subcellular location is the nucleus. It localises to the nucleolus. In terms of biological role, component of the ribosome, a large ribonucleoprotein complex responsible for the synthesis of proteins in the cell. The small ribosomal subunit (SSU) binds messenger RNAs (mRNAs) and translates the encoded message by selecting cognate aminoacyl-transfer RNA (tRNA) molecules. The large subunit (LSU) contains the ribosomal catalytic site termed the peptidyl transferase center (PTC), which catalyzes the formation of peptide bonds, thereby polymerizing the amino acids delivered by tRNAs into a polypeptide chain. The nascent polypeptides leave the ribosome through a tunnel in the LSU and interact with protein factors that function in enzymatic processing, targeting, and the membrane insertion of nascent chains at the exit of the ribosomal tunnel. uS11 is involved in nucleolar processing of pre-18S ribosomal RNA and ribosome assembly. The protein is Small ribosomal subunit protein uS11B of Saccharomyces cerevisiae (strain ATCC 204508 / S288c) (Baker's yeast).